A 290-amino-acid polypeptide reads, in one-letter code: ATP synthase gamma chain (290 aa).

It belongs to the ATPase gamma chain family. F-type ATPases have 2 components, CF(1) - the catalytic core - and CF(0) - the membrane proton channel. CF(1) has five subunits: alpha(3), beta(3), gamma(1), delta(1), epsilon(1). CF(0) has three main subunits: a, b and c.

The protein resides in the cell membrane. In terms of biological role, produces ATP from ADP in the presence of a proton gradient across the membrane. The gamma chain is believed to be important in regulating ATPase activity and the flow of protons through the CF(0) complex. The chain is ATP synthase gamma chain from Wolbachia sp. subsp. Brugia malayi (strain TRS).